The following is a 104-amino-acid chain: uncharacterized protein (104 aa).

Residues 24–69 (VIKQIIEKYNDKVKELDTLKNQYQNLQQDYENLKQQVSLQRQTMIS) adopt a coiled-coil conformation.

This is an uncharacterized protein from Acanthamoeba polyphaga mimivirus (APMV).